A 531-amino-acid polypeptide reads, in one-letter code: Peptide chain release factor 3 (531 aa).

In terms of domain architecture, tr-type G spans 13-282 (AKRRTFAIIS…TLIKYSPPPK (270 aa)). GTP-binding positions include 22–29 (SHPDAGKT), 90–94 (DTPGH), and 144–147 (NKLD).

The protein belongs to the TRAFAC class translation factor GTPase superfamily. Classic translation factor GTPase family. PrfC subfamily.

It is found in the cytoplasm. Functionally, increases the formation of ribosomal termination complexes and stimulates activities of RF-1 and RF-2. It binds guanine nucleotides and has strong preference for UGA stop codons. It may interact directly with the ribosome. The stimulation of RF-1 and RF-2 is significantly reduced by GTP and GDP, but not by GMP. This chain is Peptide chain release factor 3, found in Psychrobacter arcticus (strain DSM 17307 / VKM B-2377 / 273-4).